Reading from the N-terminus, the 441-residue chain is Ribulose bisphosphate carboxylase large chain (441 aa).

Position 5 is an N6,N6,N6-trimethyllysine (Lys5). Substrate is bound by residues Asn114 and Thr164. The Proton acceptor role is filled by Lys166. Residue Lys168 coordinates substrate. Mg(2+)-binding residues include Lys192, Asp194, and Glu195. Lys192 bears the N6-carboxylysine mark. His285 serves as the catalytic Proton acceptor. Arg286, His318, and Ser370 together coordinate substrate.

It belongs to the RuBisCO large chain family. Type I subfamily. Heterohexadecamer of 8 large chains and 8 small chains; disulfide-linked. The disulfide link is formed within the large subunit homodimers. Requires Mg(2+) as cofactor. Post-translationally, the disulfide bond which can form in the large chain dimeric partners within the hexadecamer appears to be associated with oxidative stress and protein turnover.

The protein resides in the plastid. The protein localises to the chloroplast. The catalysed reaction is 2 (2R)-3-phosphoglycerate + 2 H(+) = D-ribulose 1,5-bisphosphate + CO2 + H2O. It carries out the reaction D-ribulose 1,5-bisphosphate + O2 = 2-phosphoglycolate + (2R)-3-phosphoglycerate + 2 H(+). RuBisCO catalyzes two reactions: the carboxylation of D-ribulose 1,5-bisphosphate, the primary event in carbon dioxide fixation, as well as the oxidative fragmentation of the pentose substrate in the photorespiration process. Both reactions occur simultaneously and in competition at the same active site. This Begonia metallica x Begonia sanguinea protein is Ribulose bisphosphate carboxylase large chain.